The chain runs to 183 residues: Small ribosomal subunit protein cS23y (183 aa).

It belongs to the chloroplast-specific ribosomal protein cS23 family. In terms of assembly, part of the 30S ribosomal subunit.

Its subcellular location is the plastid. The protein resides in the chloroplast. Functionally, component of the chloroplast ribosome (chloro-ribosome), a dedicated translation machinery responsible for the synthesis of chloroplast genome-encoded proteins, including proteins of the transcription and translation machinery and components of the photosynthetic apparatus. The sequence is that of Small ribosomal subunit protein cS23y from Arabidopsis thaliana (Mouse-ear cress).